A 431-amino-acid polypeptide reads, in one-letter code: Serine--tRNA ligase (431 aa).

A disordered region spans residues 41 to 66 (QSRTQELQAERNARSKSIGEAARRGE). Residue 240 to 242 (TSE) participates in L-serine binding. Position 271 to 273 (271 to 273 (RSE)) interacts with ATP. Glutamate 294 contacts L-serine. 358-361 (EISS) serves as a coordination point for ATP. An L-serine-binding site is contributed by serine 392.

The protein belongs to the class-II aminoacyl-tRNA synthetase family. Type-1 seryl-tRNA synthetase subfamily. Homodimer. The tRNA molecule binds across the dimer.

Its subcellular location is the cytoplasm. It catalyses the reaction tRNA(Ser) + L-serine + ATP = L-seryl-tRNA(Ser) + AMP + diphosphate + H(+). The catalysed reaction is tRNA(Sec) + L-serine + ATP = L-seryl-tRNA(Sec) + AMP + diphosphate + H(+). The protein operates within aminoacyl-tRNA biosynthesis; selenocysteinyl-tRNA(Sec) biosynthesis; L-seryl-tRNA(Sec) from L-serine and tRNA(Sec): step 1/1. Functionally, catalyzes the attachment of serine to tRNA(Ser). Is also able to aminoacylate tRNA(Sec) with serine, to form the misacylated tRNA L-seryl-tRNA(Sec), which will be further converted into selenocysteinyl-tRNA(Sec). The protein is Serine--tRNA ligase of Aeromonas salmonicida (strain A449).